We begin with the raw amino-acid sequence, 255 residues long: Imidazole glycerol phosphate synthase subunit HisF (255 aa).

Catalysis depends on residues Asp12 and Asp131.

It belongs to the HisA/HisF family. Heterodimer of HisH and HisF.

The protein localises to the cytoplasm. It carries out the reaction 5-[(5-phospho-1-deoxy-D-ribulos-1-ylimino)methylamino]-1-(5-phospho-beta-D-ribosyl)imidazole-4-carboxamide + L-glutamine = D-erythro-1-(imidazol-4-yl)glycerol 3-phosphate + 5-amino-1-(5-phospho-beta-D-ribosyl)imidazole-4-carboxamide + L-glutamate + H(+). It functions in the pathway amino-acid biosynthesis; L-histidine biosynthesis; L-histidine from 5-phospho-alpha-D-ribose 1-diphosphate: step 5/9. Functionally, IGPS catalyzes the conversion of PRFAR and glutamine to IGP, AICAR and glutamate. The HisF subunit catalyzes the cyclization activity that produces IGP and AICAR from PRFAR using the ammonia provided by the HisH subunit. This chain is Imidazole glycerol phosphate synthase subunit HisF, found in Ignicoccus hospitalis (strain KIN4/I / DSM 18386 / JCM 14125).